The chain runs to 434 residues: Glutamyl-tRNA reductase (434 aa).

Substrate-binding positions include 49–52, S107, 112–114, and Q118; these read TCNR and EPQ. Residue C50 is the Nucleophile of the active site. 187–192 is an NADP(+) binding site; that stretch reads GAGETV.

The protein belongs to the glutamyl-tRNA reductase family. As to quaternary structure, homodimer.

The catalysed reaction is (S)-4-amino-5-oxopentanoate + tRNA(Glu) + NADP(+) = L-glutamyl-tRNA(Glu) + NADPH + H(+). It participates in porphyrin-containing compound metabolism; protoporphyrin-IX biosynthesis; 5-aminolevulinate from L-glutamyl-tRNA(Glu): step 1/2. Functionally, catalyzes the NADPH-dependent reduction of glutamyl-tRNA(Glu) to glutamate 1-semialdehyde (GSA). The sequence is that of Glutamyl-tRNA reductase from Hydrogenovibrio crunogenus (strain DSM 25203 / XCL-2) (Thiomicrospira crunogena).